A 524-amino-acid polypeptide reads, in one-letter code: Solute carrier family 40 member 1 (524 aa).

Over residues Met-1–Glu-18 the composition is skewed to basic and acidic residues. The segment at Met-1–Pro-30 is disordered. 11 helical membrane passes run Ser-70–Val-92, Leu-109–Val-129, Leu-137–Ser-157, Gly-191–Val-211, Ile-218–Val-238, Val-314–Leu-334, Tyr-347–Tyr-367, Gly-380–Val-400, Met-409–Ile-429, Gly-446–Val-466, and Phe-472–Ile-492.

Belongs to the ferroportin (FP) (TC 2.A.100) family. SLC40A subfamily.

The protein localises to the membrane. Its function is as follows. May be involved in iron transport and iron homeostasis. The polypeptide is Solute carrier family 40 member 1 (IREG1) (Arabidopsis thaliana (Mouse-ear cress)).